The chain runs to 213 residues: Peroxynitrite isomerase 2 (213 aa).

Positions 58 to 64 (GVWRGEG) match the GXWXGXG motif. Heme b-binding residues include Lys-176 and His-203.

Belongs to the nitrobindin family. As to quaternary structure, homodimer. It depends on heme b as a cofactor.

It carries out the reaction peroxynitrite = nitrate. It participates in nitrogen metabolism. Heme-binding protein able to scavenge peroxynitrite and to protect free L-tyrosine against peroxynitrite-mediated nitration, by acting as a peroxynitrite isomerase that converts peroxynitrite to nitrate. Therefore, this protein likely plays a role in peroxynitrite sensing and in the detoxification of reactive nitrogen and oxygen species (RNS and ROS, respectively). Is able to bind nitric oxide (NO) in vitro, but may act as a sensor of peroxynitrite levels in vivo. The polypeptide is Peroxynitrite isomerase 2 (Rhodococcus jostii (strain RHA1)).